A 363-amino-acid polypeptide reads, in one-letter code: Large ribosomal subunit protein uL4A (363 aa).

Residue Ser-87 is modified to Phosphoserine. Positions 280-363 (PENIISNADV…EKFLTVLHEN (84 aa)) are C-terminal-extended nuclear localization signal.

Belongs to the universal ribosomal protein uL4 family. As to quaternary structure, component of the large ribosomal subunit (LSU). Mature yeast ribosomes consist of a small (40S) and a large (60S) subunit. The 40S small subunit contains 1 molecule of ribosomal RNA (18S rRNA) and at least 33 different proteins. The large 60S subunit contains 3 rRNA molecules (25S, 5.8S and 5S rRNA) and at least 46 different proteins. uL4 is associated with the polypeptide exit tunnel. uL4 interacts with its chaperone ACL4 and the nuclear import receptor KAP104.

The protein resides in the cytoplasm. The protein localises to the nucleus. Its function is as follows. Component of the ribosome, a large ribonucleoprotein complex responsible for the synthesis of proteins in the cell. The small ribosomal subunit (SSU) binds messenger RNAs (mRNAs) and translates the encoded message by selecting cognate aminoacyl-transfer RNA (tRNA) molecules. The large subunit (LSU) contains the ribosomal catalytic site termed the peptidyl transferase center (PTC), which catalyzes the formation of peptide bonds, thereby polymerizing the amino acids delivered by tRNAs into a polypeptide chain. The nascent polypeptides leave the ribosome through a tunnel in the LSU and interact with protein factors that function in enzymatic processing, targeting, and the membrane insertion of nascent chains at the exit of the ribosomal tunnel. uL4 participates in the regulation of the accumulation of its own mRNA. This Schizosaccharomyces pombe (strain 972 / ATCC 24843) (Fission yeast) protein is Large ribosomal subunit protein uL4A (rpl402).